Reading from the N-terminus, the 307-residue chain is MNNLPLLNDLRVFMLVARRAGFAAVAEELGVSPAFVSKRIALLEQTLNVVLLHRTTRRVTITEEGERIYEWAQRILQDVGQMMDELSDVRQVPQGMLRIISSFGFGRQVVAPALLALAKAYPQLELRFDVEDRLVDLVNEGVDLDIRIGDDIAPNLIARKLATNYRILCASPEFIAQHGAPKHLTDLSALPCLVIKERDHPFGVWQLRNKEGPHAIKVTGPLSSNHGEIVHQWCLDGQGIALRSWWDVSENIASGHLVQVLPEYYQPANVWAVYVSRLATSAKVRITVEFLRQYFAEHYPNFSLEHA.

Positions 5-62 constitute an HTH lysR-type domain; it reads PLLNDLRVFMLVARRAGFAAVAEELGVSPAFVSKRIALLEQTLNVVLLHRTTRRVTIT. Residues 22–41 constitute a DNA-binding region (H-T-H motif); the sequence is FAAVAEELGVSPAFVSKRIA.

This sequence belongs to the LysR transcriptional regulatory family.

Transcriptional regulator required for the aerobic growth on D-malate as the sole carbon source. Induces the expression of dmlA in response to D-malate or L- or meso-tartrate. Negatively regulates its own expression. The sequence is that of HTH-type transcriptional regulator DmlR (dmlR) from Escherichia coli (strain K12).